The primary structure comprises 170 residues: Ureidoglycolate lyase (170 aa).

This sequence belongs to the ureidoglycolate lyase family. Homodimer. It depends on Ni(2+) as a cofactor.

It catalyses the reaction (S)-ureidoglycolate = urea + glyoxylate. It participates in nitrogen metabolism; (S)-allantoin degradation. Functionally, catalyzes the catabolism of the allantoin degradation intermediate (S)-ureidoglycolate, generating urea and glyoxylate. Involved in the utilization of allantoin as nitrogen source. The sequence is that of Ureidoglycolate lyase from Burkholderia mallei (strain NCTC 10247).